Here is a 448-residue protein sequence, read N- to C-terminus: tRNA(Ile)-lysidine synthase (448 aa).

Serine 25–serine 30 contributes to the ATP binding site.

It belongs to the tRNA(Ile)-lysidine synthase family.

The protein resides in the cytoplasm. It carries out the reaction cytidine(34) in tRNA(Ile2) + L-lysine + ATP = lysidine(34) in tRNA(Ile2) + AMP + diphosphate + H(+). In terms of biological role, ligates lysine onto the cytidine present at position 34 of the AUA codon-specific tRNA(Ile) that contains the anticodon CAU, in an ATP-dependent manner. Cytidine is converted to lysidine, thus changing the amino acid specificity of the tRNA from methionine to isoleucine. In Brucella suis biovar 1 (strain 1330), this protein is tRNA(Ile)-lysidine synthase.